A 285-amino-acid polypeptide reads, in one-letter code: Bifunctional protein FolD (285 aa).

Residues 165–167, threonine 192, and valine 233 each bind NADP(+); that span reads GRG.

This sequence belongs to the tetrahydrofolate dehydrogenase/cyclohydrolase family. As to quaternary structure, homodimer.

It carries out the reaction (6R)-5,10-methylene-5,6,7,8-tetrahydrofolate + NADP(+) = (6R)-5,10-methenyltetrahydrofolate + NADPH. It catalyses the reaction (6R)-5,10-methenyltetrahydrofolate + H2O = (6R)-10-formyltetrahydrofolate + H(+). The protein operates within one-carbon metabolism; tetrahydrofolate interconversion. Catalyzes the oxidation of 5,10-methylenetetrahydrofolate to 5,10-methenyltetrahydrofolate and then the hydrolysis of 5,10-methenyltetrahydrofolate to 10-formyltetrahydrofolate. The polypeptide is Bifunctional protein FolD (Mycobacterium sp. (strain MCS)).